A 169-amino-acid polypeptide reads, in one-letter code: Peptide methionine sulfoxide reductase MsrA 1 (169 aa).

Cys12 is a catalytic residue.

The protein belongs to the MsrA Met sulfoxide reductase family.

It catalyses the reaction L-methionyl-[protein] + [thioredoxin]-disulfide + H2O = L-methionyl-(S)-S-oxide-[protein] + [thioredoxin]-dithiol. The enzyme catalyses [thioredoxin]-disulfide + L-methionine + H2O = L-methionine (S)-S-oxide + [thioredoxin]-dithiol. In terms of biological role, has an important function as a repair enzyme for proteins that have been inactivated by oxidation. Catalyzes the reversible oxidation-reduction of methionine sulfoxide in proteins to methionine. This is Peptide methionine sulfoxide reductase MsrA 1 (msrA1) from Staphylococcus aureus (strain Mu50 / ATCC 700699).